The following is a 141-amino-acid chain: Large ribosomal subunit protein uL11 (141 aa).

This sequence belongs to the universal ribosomal protein uL11 family. In terms of assembly, part of the ribosomal stalk of the 50S ribosomal subunit. Interacts with L10 and the large rRNA to form the base of the stalk. L10 forms an elongated spine to which L12 dimers bind in a sequential fashion forming a multimeric L10(L12)X complex. In terms of processing, one or more lysine residues are methylated.

Functionally, forms part of the ribosomal stalk which helps the ribosome interact with GTP-bound translation factors. This chain is Large ribosomal subunit protein uL11, found in Natranaerobius thermophilus (strain ATCC BAA-1301 / DSM 18059 / JW/NM-WN-LF).